A 329-amino-acid polypeptide reads, in one-letter code: tRNA uridine(34) hydroxylase (329 aa).

Positions Ser123–Ser217 constitute a Rhodanese domain. The active-site Cysteine persulfide intermediate is Cys177. A disordered region spans residues Leu310–Asn329. Basic and acidic residues predominate over residues Gln317–Asn329.

It belongs to the TrhO family.

The catalysed reaction is uridine(34) in tRNA + AH2 + O2 = 5-hydroxyuridine(34) in tRNA + A + H2O. Its function is as follows. Catalyzes oxygen-dependent 5-hydroxyuridine (ho5U) modification at position 34 in tRNAs. The polypeptide is tRNA uridine(34) hydroxylase (Francisella tularensis subsp. novicida (strain U112)).